The following is a 591-amino-acid chain: Indole-3-acetic acid-amido synthetase GH3.10 (591 aa).

The protein belongs to the IAA-amido conjugating enzyme family. Expressed in cotyledons and hypocotyls.

Functionally, catalyzes the synthesis of indole-3-acetic acid (IAA)-amino acid conjugates, providing a mechanism for the plant to cope with the presence of excess auxin. Involved in red light-specific hypocotyl elongation. May act downstream of a red light signal transduction and determine the degree of hypocotyl elongation. This is Indole-3-acetic acid-amido synthetase GH3.10 from Arabidopsis thaliana (Mouse-ear cress).